The following is a 148-amino-acid chain: Aspartate 1-decarboxylase (148 aa).

Serine 25 serves as the catalytic Schiff-base intermediate with substrate; via pyruvic acid. Serine 25 carries the post-translational modification Pyruvic acid (Ser). A substrate-binding site is contributed by threonine 57. The Proton donor role is filled by tyrosine 58. 73 to 75 (GAA) provides a ligand contact to substrate.

Belongs to the PanD family. Heterooctamer of four alpha and four beta subunits. Pyruvate serves as cofactor. Post-translationally, is synthesized initially as an inactive proenzyme, which is activated by self-cleavage at a specific serine bond to produce a beta-subunit with a hydroxyl group at its C-terminus and an alpha-subunit with a pyruvoyl group at its N-terminus.

Its subcellular location is the cytoplasm. The catalysed reaction is L-aspartate + H(+) = beta-alanine + CO2. It participates in cofactor biosynthesis; (R)-pantothenate biosynthesis; beta-alanine from L-aspartate: step 1/1. In terms of biological role, catalyzes the pyruvoyl-dependent decarboxylation of aspartate to produce beta-alanine. This is Aspartate 1-decarboxylase from Rhodococcus jostii (strain RHA1).